A 187-amino-acid chain; its full sequence is Elongation factor P (187 aa).

The protein belongs to the elongation factor P family.

It localises to the cytoplasm. It participates in protein biosynthesis; polypeptide chain elongation. Involved in peptide bond synthesis. Stimulates efficient translation and peptide-bond synthesis on native or reconstituted 70S ribosomes in vitro. Probably functions indirectly by altering the affinity of the ribosome for aminoacyl-tRNA, thus increasing their reactivity as acceptors for peptidyl transferase. The polypeptide is Elongation factor P (efp) (Helicobacter pylori (strain J99 / ATCC 700824) (Campylobacter pylori J99)).